Here is a 113-residue protein sequence, read N- to C-terminus: MVKIERKATDSAYHEFTKILTSSAQLMAFLNQSDFVKARAKVENETVQQIASHFKFSQENNLNQLILSSFDREEVDQLFVEYIRYVNNQVRQTLNNELITKWKSLFEKRKITD.

The first 38 residues, 1-38 (MVKIERKATDSAYHEFTKILTSSAQLMAFLNQSDFVKA), serve as a signal peptide directing secretion.

This is an uncharacterized protein from Haemophilus influenzae (strain ATCC 51907 / DSM 11121 / KW20 / Rd).